The sequence spans 230 residues: Orotidine 5'-phosphate decarboxylase (230 aa).

Residues D11, K34, 61-70, T117, R179, Q188, G208, and R209 each bind substrate; that span reads DLKLHDIPNT. K63 functions as the Proton donor in the catalytic mechanism.

This sequence belongs to the OMP decarboxylase family. Type 1 subfamily. Homodimer.

It catalyses the reaction orotidine 5'-phosphate + H(+) = UMP + CO2. It functions in the pathway pyrimidine metabolism; UMP biosynthesis via de novo pathway; UMP from orotate: step 2/2. Catalyzes the decarboxylation of orotidine 5'-monophosphate (OMP) to uridine 5'-monophosphate (UMP). The polypeptide is Orotidine 5'-phosphate decarboxylase (Streptococcus pyogenes serotype M49 (strain NZ131)).